A 78-amino-acid polypeptide reads, in one-letter code: Small ribosomal subunit protein bS18 (78 aa).

It belongs to the bacterial ribosomal protein bS18 family. As to quaternary structure, part of the 30S ribosomal subunit. Forms a tight heterodimer with protein bS6.

Its function is as follows. Binds as a heterodimer with protein bS6 to the central domain of the 16S rRNA, where it helps stabilize the platform of the 30S subunit. The polypeptide is Small ribosomal subunit protein bS18 (Nocardioides sp. (strain ATCC BAA-499 / JS614)).